Consider the following 315-residue polypeptide: Taste receptor type 2 member 3 (315 aa).

Over 1-5 (MGLTD) the chain is Extracellular. Residues 6 to 26 (GVFLIVCGAQFTLGILXNGFI) traverse the membrane as a helical segment. Residues 27–41 (GLVNGRSWFKTKRMS) are Cytoplasmic-facing. The helical transmembrane segment at 42 to 62 (LSDFIIATLALSRIILLCIIL) threads the bilayer. Residues 63 to 93 (TDSFLIVFSVKEHDSGIIMQLIDVFWTFTNH) are Extracellular-facing. The chain crosses the membrane as a helical span at residues 94 to 114 (LSIWFATCLGVLYCLKIASFS). Residues 115-127 (HPTFLWLKWRVSR) lie on the Cytoplasmic side of the membrane. A helical transmembrane segment spans residues 128–148 (VMVWMLLGALLLSCGSTASLI). Topologically, residues 149-185 (NEFKLYSVLRGIEATRNVTEHFRKKRNEYYLIHVLGT) are extracellular. The N-linked (GlcNAc...) asparagine glycan is linked to Asn165. Residues 186–206 (LWYLPPLVVSLASYFLLIFSL) form a helical membrane-spanning segment. The Cytoplasmic segment spans residues 207–233 (GRHTRQMLQNSTSSRDPSTEAHKRAIR). The chain crosses the membrane as a helical span at residues 234–254 (IILSFFFLFLLYFLAFLIASF). Residues 255–265 (GNFLPETKMAK) lie on the Extracellular side of the membrane. Residues 266–286 (MIGEVMTMFYPAGHSFIVILG) form a helical membrane-spanning segment. Residues 287–315 (NSKLKQTFVEMLRCESGHLKPGSKGPIFS) are Cytoplasmic-facing.

Belongs to the G-protein coupled receptor T2R family.

The protein resides in the membrane. Functionally, gustducin-coupled receptor implicated in the perception of bitter compounds in the oral cavity and the gastrointestinal tract. Signals through PLCB2 and the calcium-regulated cation channel TRPM5. The sequence is that of Taste receptor type 2 member 3 (TAS2R3) from Papio hamadryas (Hamadryas baboon).